The chain runs to 387 residues: Probable nitrate transporter NarT (387 aa).

The next 12 helical transmembrane spans lie at 14–34 (TLSL…MPFI), 45–65 (ISVI…PFGY), 69–89 (IVGA…PIFL), 97–117 (GMLM…SVGV), 137–157 (GVGN…AGAI), 161–181 (NTVR…FFLG), 211–231 (WYFI…NFLV), 246–266 (GIFI…GDKF), 268–288 (AVQA…ILSL), 294–314 (LFTI…GLIF), 330–350 (GIVS…ITFV), and 358–378 (HLAF…MIHL).

This sequence belongs to the major facilitator superfamily. Nitrate/nitrite porter (TC 2.A.1.8) family.

The protein localises to the cell membrane. Its function is as follows. Probably required for nitrate uptake under anoxic conditions. Also possibly involved in excretion of nitrite produced by the dissimilatory reduction of nitrate. This is Probable nitrate transporter NarT (narT) from Staphylococcus epidermidis (strain ATCC 35984 / DSM 28319 / BCRC 17069 / CCUG 31568 / BM 3577 / RP62A).